The chain runs to 430 residues: Adenylosuccinate synthetase (430 aa).

GTP-binding positions include 13–19 (GDEGKGK) and 41–43 (GHT). The Proton acceptor role is filled by Asp14. Mg(2+) is bound by residues Asp14 and Gly41. Residues 14–17 (DEGK), 39–42 (NAGH), Thr130, Arg144, Gln225, Thr240, and Arg304 contribute to the IMP site. His42 acts as the Proton donor in catalysis. 300 to 306 (ASTGRPR) contacts substrate. Residues Arg306, 332 to 334 (KLD), and 414 to 416 (STG) contribute to the GTP site.

This sequence belongs to the adenylosuccinate synthetase family. In terms of assembly, homodimer. Mg(2+) serves as cofactor.

The protein resides in the cytoplasm. It carries out the reaction IMP + L-aspartate + GTP = N(6)-(1,2-dicarboxyethyl)-AMP + GDP + phosphate + 2 H(+). The protein operates within purine metabolism; AMP biosynthesis via de novo pathway; AMP from IMP: step 1/2. Functionally, plays an important role in the de novo pathway of purine nucleotide biosynthesis. Catalyzes the first committed step in the biosynthesis of AMP from IMP. This is Adenylosuccinate synthetase from Xanthomonas campestris pv. campestris (strain 8004).